A 132-amino-acid chain; its full sequence is Small ribosomal subunit protein uS11 (132 aa).

It belongs to the universal ribosomal protein uS11 family. As to quaternary structure, part of the 30S ribosomal subunit. Interacts with proteins S7 and S18. Binds to IF-3.

Functionally, located on the platform of the 30S subunit, it bridges several disparate RNA helices of the 16S rRNA. Forms part of the Shine-Dalgarno cleft in the 70S ribosome. The protein is Small ribosomal subunit protein uS11 of Alcanivorax borkumensis (strain ATCC 700651 / DSM 11573 / NCIMB 13689 / SK2).